The following is a 359-amino-acid chain: Dihydroorotate dehydrogenase (quinone) (359 aa).

Residues Ala-68 to Lys-72 and Thr-92 each bind FMN. A substrate-binding site is contributed by Lys-72. Asn-117–Phe-121 serves as a coordination point for substrate. FMN contacts are provided by Asn-145 and Asn-176. Asn-176 lines the substrate pocket. The active-site Nucleophile is Ser-179. Asn-181 serves as a coordination point for substrate. FMN is bound by residues Lys-212 and Thr-240. Asn-241 to Thr-242 serves as a coordination point for substrate. FMN contacts are provided by residues Gly-266, Gly-295, and Tyr-316–Thr-317.

This sequence belongs to the dihydroorotate dehydrogenase family. Type 2 subfamily. In terms of assembly, monomer. The cofactor is FMN.

Its subcellular location is the cell membrane. The catalysed reaction is (S)-dihydroorotate + a quinone = orotate + a quinol. Its pathway is pyrimidine metabolism; UMP biosynthesis via de novo pathway; orotate from (S)-dihydroorotate (quinone route): step 1/1. Its function is as follows. Catalyzes the conversion of dihydroorotate to orotate with quinone as electron acceptor. The chain is Dihydroorotate dehydrogenase (quinone) from Corynebacterium striatum.